Here is a 325-residue protein sequence, read N- to C-terminus: Probable pectate lyase B (325 aa).

Positions 1-15 are cleaved as a signal peptide; that stretch reads MRLPTLFMLAAIATA. Residues aspartate 132, aspartate 161, and aspartate 165 each coordinate Ca(2+). Arginine 218 is an active-site residue.

This sequence belongs to the polysaccharide lyase 1 family. The cofactor is Ca(2+).

It localises to the secreted. It catalyses the reaction Eliminative cleavage of (1-&gt;4)-alpha-D-galacturonan to give oligosaccharides with 4-deoxy-alpha-D-galact-4-enuronosyl groups at their non-reducing ends.. Its function is as follows. Pectinolytic enzyme consist of four classes of enzymes: pectin lyase, polygalacturonase, pectin methylesterase and rhamnogalacturonase. Among pectinolytic enzymes, pectin lyase is the most important in depolymerization of pectin, since it cleaves internal glycosidic bonds of highly methylated pectins. Favors pectate, the anion, over pectin, the methyl ester. This chain is Probable pectate lyase B (plyB), found in Aspergillus terreus (strain NIH 2624 / FGSC A1156).